A 108-amino-acid polypeptide reads, in one-letter code: Glutaredoxin-like protein YDR286C homolog (108 aa).

C22 and C25 are joined by a disulfide.

Belongs to the glutaredoxin family. YDR286C subfamily.

In Dictyostelium discoideum (Social amoeba), this protein is Glutaredoxin-like protein YDR286C homolog.